The chain runs to 215 residues: Probable transaldolase 1 (215 aa).

Catalysis depends on lysine 83, which acts as the Schiff-base intermediate with substrate.

This sequence belongs to the transaldolase family. Type 3B subfamily.

The protein localises to the cytoplasm. The enzyme catalyses D-sedoheptulose 7-phosphate + D-glyceraldehyde 3-phosphate = D-erythrose 4-phosphate + beta-D-fructose 6-phosphate. It participates in carbohydrate degradation; pentose phosphate pathway; D-glyceraldehyde 3-phosphate and beta-D-fructose 6-phosphate from D-ribose 5-phosphate and D-xylulose 5-phosphate (non-oxidative stage): step 2/3. Functionally, transaldolase is important for the balance of metabolites in the pentose-phosphate pathway. This is Probable transaldolase 1 from Bacillus anthracis.